A 1028-amino-acid chain; its full sequence is Antigenic heat-stable 120 kDa protein (1028 aa).

Composition is skewed to polar residues over residues 359-384 (GQSK…QYKQ) and 391-400 (PTNQPLQPET). A disordered region spans residues 359–405 (GQSKEQPLITPQQTTSSSVEPPQYKQQVPPITPTNQPLQPETSQMQQ).

It is found in the cytoplasm. The protein is Antigenic heat-stable 120 kDa protein (sca4) of Rickettsia africae.